A 381-amino-acid polypeptide reads, in one-letter code: Metallophosphoesterase 1 (381 aa).

A helical transmembrane segment spans residues 15-35 (LIFAFVSVFVFCEYVIYYLVI). A divalent metal cation contacts are provided by Asp59, Asp101, Asn139, His234, His288, and His290. The helical transmembrane segment at 341 to 361 (TVLVVYCSSCLIIALITLIHL) threads the bilayer. Positions 377–381 (KHKTL) match the Di-lysine motif motif.

The protein belongs to the metallophosphoesterase superfamily. MPPE1 family. Requires Mn(2+) as cofactor.

It is found in the endoplasmic reticulum-Golgi intermediate compartment membrane. Its function is as follows. Metallophosphoesterase that catalyzes the removal of a side-chain ethanolamine-phosphate (EtNP) from the second mannose of the GPI-anchor protein intermediate. Participates in the glycan remodeling steps of GPI-anchor maturation to allow an efficient transport of GPI-anchor proteins from the endoplasmic reticulum to the Golgi. In Danio rerio (Zebrafish), this protein is Metallophosphoesterase 1.